The chain runs to 200 residues: Probable GTP-binding protein EngB (200 aa).

Residues 23–197 enclose the EngB-type G domain; sequence KNSEVVFIGR…RERVLKDVLG (175 aa). GTP contacts are provided by residues 31–38, 58–62, 83–86, 153–156, and 175–177; these read GRSNVGKS, GKTQL, DLPG, TKMD, and FTA. The Mg(2+) site is built by serine 38 and threonine 60.

This sequence belongs to the TRAFAC class TrmE-Era-EngA-EngB-Septin-like GTPase superfamily. EngB GTPase family. The cofactor is Mg(2+).

Functionally, necessary for normal cell division and for the maintenance of normal septation. In Wolinella succinogenes (strain ATCC 29543 / DSM 1740 / CCUG 13145 / JCM 31913 / LMG 7466 / NCTC 11488 / FDC 602W) (Vibrio succinogenes), this protein is Probable GTP-binding protein EngB.